The following is a 273-amino-acid chain: Dermonecrotic toxin SdSicTox-betaIF1 (273 aa).

Residue His5 is part of the active site. Glu25 and Asp27 together coordinate Mg(2+). The Nucleophile role is filled by His41. Intrachain disulfides connect Cys45–Cys51 and Cys47–Cys189.

It belongs to the arthropod phospholipase D family. Class II subfamily. The cofactor is Mg(2+). As to expression, expressed by the venom gland.

It is found in the secreted. It carries out the reaction an N-(acyl)-sphingosylphosphocholine = an N-(acyl)-sphingosyl-1,3-cyclic phosphate + choline. It catalyses the reaction an N-(acyl)-sphingosylphosphoethanolamine = an N-(acyl)-sphingosyl-1,3-cyclic phosphate + ethanolamine. The enzyme catalyses a 1-acyl-sn-glycero-3-phosphocholine = a 1-acyl-sn-glycero-2,3-cyclic phosphate + choline. The catalysed reaction is a 1-acyl-sn-glycero-3-phosphoethanolamine = a 1-acyl-sn-glycero-2,3-cyclic phosphate + ethanolamine. Functionally, dermonecrotic toxins cleave the phosphodiester linkage between the phosphate and headgroup of certain phospholipids (sphingolipid and lysolipid substrates), forming an alcohol (often choline) and a cyclic phosphate. This toxin acts on sphingomyelin (SM). It may also act on ceramide phosphoethanolamine (CPE), lysophosphatidylcholine (LPC) and lysophosphatidylethanolamine (LPE), but not on lysophosphatidylserine (LPS), and lysophosphatidylglycerol (LPG). It acts by transphosphatidylation, releasing exclusively cyclic phosphate products as second products. Induces dermonecrosis, hemolysis, increased vascular permeability, edema, inflammatory response, and platelet aggregation. The chain is Dermonecrotic toxin SdSicTox-betaIF1 from Sicarius cf. damarensis (strain GJB-2008) (Six-eyed sand spider).